The following is a 314-amino-acid chain: tRNA dimethylallyltransferase (314 aa).

16–23 is an ATP binding site; that stretch reads GPTGVGKT. Substrate is bound at residue 18–23; sequence TGVGKT. Residues 41–44 are interaction with substrate tRNA; sequence DSMQ.

Belongs to the IPP transferase family. In terms of assembly, monomer. The cofactor is Mg(2+).

The catalysed reaction is adenosine(37) in tRNA + dimethylallyl diphosphate = N(6)-dimethylallyladenosine(37) in tRNA + diphosphate. Its function is as follows. Catalyzes the transfer of a dimethylallyl group onto the adenine at position 37 in tRNAs that read codons beginning with uridine, leading to the formation of N6-(dimethylallyl)adenosine (i(6)A). The chain is tRNA dimethylallyltransferase from Desulfosudis oleivorans (strain DSM 6200 / JCM 39069 / Hxd3) (Desulfococcus oleovorans).